A 469-amino-acid chain; its full sequence is Argininosuccinate lyase (469 aa).

This sequence belongs to the lyase 1 family. Argininosuccinate lyase subfamily.

It is found in the cytoplasm. The enzyme catalyses 2-(N(omega)-L-arginino)succinate = fumarate + L-arginine. It functions in the pathway amino-acid biosynthesis; L-arginine biosynthesis; L-arginine from L-ornithine and carbamoyl phosphate: step 3/3. This Burkholderia cenocepacia (strain HI2424) protein is Argininosuccinate lyase.